The following is a 557-amino-acid chain: 2-isopropylmalate synthase (557 aa).

A Pyruvate carboxyltransferase domain is found at 33 to 307; sequence PLWLSTDLRD…DPGLDFSDID (275 aa). Positions 42, 246, 248, and 282 each coordinate Mg(2+). A regulatory domain region spans residues 439-557; sequence AETPYALKGH…LGQQASIRAA (119 aa).

Belongs to the alpha-IPM synthase/homocitrate synthase family. LeuA type 2 subfamily. In terms of assembly, homodimer. Mg(2+) serves as cofactor.

It is found in the cytoplasm. The catalysed reaction is 3-methyl-2-oxobutanoate + acetyl-CoA + H2O = (2S)-2-isopropylmalate + CoA + H(+). It functions in the pathway amino-acid biosynthesis; L-leucine biosynthesis; L-leucine from 3-methyl-2-oxobutanoate: step 1/4. Its function is as follows. Catalyzes the condensation of the acetyl group of acetyl-CoA with 3-methyl-2-oxobutanoate (2-ketoisovalerate) to form 3-carboxy-3-hydroxy-4-methylpentanoate (2-isopropylmalate). In Azotobacter vinelandii (strain DJ / ATCC BAA-1303), this protein is 2-isopropylmalate synthase.